A 168-amino-acid chain; its full sequence is mRNA stability protein IGO1 (168 aa).

The segment covering 1 to 13 has biased composition (low complexity); it reads MSNENLSPNSSNP. Positions 1-31 are disordered; sequence MSNENLSPNSSNPDLTKLNNGESGTIDTSKF. The segment covering 17–31 has biased composition (polar residues); it reads KLNNGESGTIDTSKF. A phosphoserine mark is found at serine 32 and serine 64. Positions 125 to 168 are disordered; the sequence is KEGSISSGPPSSNNGTIGGGSTSSTPVGNHSSSSSSLYTESPIR. Composition is skewed to low complexity over residues 127-139 and 146-168; these read GSISSGPPSSNNG and TSSTPVGNHSSSSSSLYTESPIR.

It belongs to the endosulfine family. Interacts with RIM15, DHH1, PBP1, PBP4 and LSM12. In terms of processing, phosphorylated at Ser-64 by RIM15.

In terms of biological role, required for TORC1 to properly control gene expression and chronological life span. Plays an essential role in initiation of the G0 program by preventing the degradation of specific nutrient-regulated mRNAs via the 5'-3' mRNA decay pathway. This is mRNA stability protein IGO1 (IGO1) from Saccharomyces cerevisiae (strain ATCC 204508 / S288c) (Baker's yeast).